The chain runs to 251 residues: Zwei Ig domain protein zig-3 (251 aa).

The N-terminal stretch at 1–19 (MLLICISVLAAISAHPLSS) is a signal peptide. Ig-like C2-type domains lie at 42–144 (PSLK…AKIS) and 160–244 (PVIT…TFLY). 2 cysteine pairs are disulfide-bonded: Cys-65/Cys-128 and Cys-181/Cys-228.

Expressed in PVT, AIM and ASI neurons, in vulva and weakly in body wall muscles.

The protein resides in the secreted. Functionally, required for maintaining axon position of PVQ and PVP neurons postembryonically in the ventral nerve cord (VNC) by preventing axons drifting into the opposite side of the VNC that could occur during body growth and movement. This is Zwei Ig domain protein zig-3 from Caenorhabditis elegans.